Here is a 107-residue protein sequence, read N- to C-terminus: MSRIARKQQKNLIQAIAIQRMWRLFELAKSEYAEHPDRSERYVQLIRNISMRNRMSIPREIKNRICKHCYAFLVPGNNARYRLKDGYIVVSCQRCGKEMRYPYKKLK.

Cys66, Cys69, Cys92, and Cys95 together coordinate Zn(2+).

This sequence belongs to the eukaryotic/archaeal RNase P protein component 4 family. As to quaternary structure, consists of a catalytic RNA component and at least 4-5 protein subunits. Zn(2+) serves as cofactor.

It localises to the cytoplasm. It carries out the reaction Endonucleolytic cleavage of RNA, removing 5'-extranucleotides from tRNA precursor.. Its function is as follows. Part of ribonuclease P, a protein complex that generates mature tRNA molecules by cleaving their 5'-ends. The sequence is that of Ribonuclease P protein component 4 from Methanosarcina barkeri (strain Fusaro / DSM 804).